The sequence spans 103 residues: MAAVSLSVSTVKPLGDRIFVKVAESEERTAGGILLPDNAREKPQVGEVTAVGPGKLTEDGKRQPMDVKVGDKVLYSKYAGTEVKLAGEDYVLLSEKDILAIVG.

The protein belongs to the GroES chaperonin family. In terms of assembly, heptamer of 7 subunits arranged in a ring. Interacts with the chaperonin GroEL.

Its subcellular location is the cytoplasm. In terms of biological role, together with the chaperonin GroEL, plays an essential role in assisting protein folding. The GroEL-GroES system forms a nano-cage that allows encapsulation of the non-native substrate proteins and provides a physical environment optimized to promote and accelerate protein folding. GroES binds to the apical surface of the GroEL ring, thereby capping the opening of the GroEL channel. The protein is Co-chaperonin GroES of Thermosynechococcus vestitus (strain NIES-2133 / IAM M-273 / BP-1).